Reading from the N-terminus, the 238-residue chain is MADS-box protein 04g005320 (238 aa).

Residues Met1–Ser61 form the MADS-box domain. The K-box domain occupies Ser87 to Ala177.

Its subcellular location is the nucleus. Functionally, probable MADS-box transcription factor that functions with J2 and EJ2 in meristem maturation. This is MADS-box protein 04g005320 from Solanum lycopersicum (Tomato).